We begin with the raw amino-acid sequence, 181 residues long: 6,7-dimethyl-8-ribityllumazine synthase 2 (181 aa).

Residues 1–23 (MSLPMTETVTDPAETAPPTAERS) form a disordered region. Residues Trp40, 74-76 (SFE), 98-100 (LVV), and Ser129 contribute to the 5-amino-6-(D-ribitylamino)uracil site.

The protein belongs to the DMRL synthase family.

The enzyme catalyses (2S)-2-hydroxy-3-oxobutyl phosphate + 5-amino-6-(D-ribitylamino)uracil = 6,7-dimethyl-8-(1-D-ribityl)lumazine + phosphate + 2 H2O + H(+). It functions in the pathway cofactor biosynthesis; riboflavin biosynthesis; riboflavin from 2-hydroxy-3-oxobutyl phosphate and 5-amino-6-(D-ribitylamino)uracil: step 1/2. Functionally, catalyzes the formation of 6,7-dimethyl-8-ribityllumazine by condensation of 5-amino-6-(D-ribitylamino)uracil with 3,4-dihydroxy-2-butanone 4-phosphate. This is the penultimate step in the biosynthesis of riboflavin. The sequence is that of 6,7-dimethyl-8-ribityllumazine synthase 2 from Rhodopseudomonas palustris (strain ATCC BAA-98 / CGA009).